Consider the following 427-residue polypeptide: Serine protease HTRA2, mitochondrial (427 aa).

The interval 33 to 55 (HTASSSKGSGGDNSKDKENNGQN) is disordered. Residues 66 to 86 (SAFQFCVPFSLGALVSAVLIE) form a helical membrane-spanning segment. The short motif at 78-81 (ALVS) is the IAP-binding element. The interval 144–307 (SNGSGFVIEQ…IPIDYVKVFL (164 aa)) is serine protease. Catalysis depends on charge relay system residues H162, D194, and S271. The PDZ domain occupies 330-415 (MGITMLTLTP…DLEIVILRGV (86 aa)).

It belongs to the peptidase S1C family. Interacts with th/DIAP1 (via BIR 2 domain).

Its subcellular location is the mitochondrion intermembrane space. It is found in the mitochondrion membrane. It carries out the reaction Cleavage of non-polar aliphatic amino-acids at the P1 position, with a preference for Val, Ile and Met. At the P2 and P3 positions, Arg is selected most strongly with a secondary preference for other hydrophilic residues.. Its function is as follows. Serine protease that shows proteolytic activity against a non-specific substrate beta-casein. Promotes or induces cell death either by direct binding to and inhibition of BIRC proteins (also called inhibitor of apoptosis proteins, IAPs), leading to an increase in caspase activity, or by a BIRC inhibition-independent, caspase-independent and serine protease activity-dependent mechanism. Can antagonize antiapoptotic activity of th/Diap1 by directly inducing the degradation of th/Diap1. In Drosophila pseudoobscura pseudoobscura (Fruit fly), this protein is Serine protease HTRA2, mitochondrial.